The sequence spans 584 residues: uncharacterized protein (584 aa).

Disordered stretches follow at residues Leu123–Pro156, Lys209–Gly264, and Ser355–Thr479. Composition is skewed to low complexity over residues Ser237–Ser260 and Ser366–Thr376. Polar residues-rich tracts occupy residues Pro377–Thr388 and Asp395–Pro419. Positions Met425–Thr479 are enriched in low complexity.

This is an uncharacterized protein from Dictyostelium discoideum (Social amoeba).